Reading from the N-terminus, the 152-residue chain is Small ribosomal subunit protein uS13 (152 aa).

This sequence belongs to the universal ribosomal protein uS13 family. In terms of assembly, component of the small ribosomal subunit.

It localises to the cytoplasm. Its function is as follows. Component of the small ribosomal subunit. The ribosome is a large ribonucleoprotein complex responsible for the synthesis of proteins in the cell. In Ictalurus punctatus (Channel catfish), this protein is Small ribosomal subunit protein uS13 (rps18).